The sequence spans 452 residues: SAGA complex/transcription factor TFIID complex subunit Taf6 (452 aa).

A Histone-fold domain is found at 4–68; it reads TVWNIESIKD…TSADISSALR (65 aa).

This sequence belongs to the TAF6 family. As to quaternary structure, component of the 1.8 MDa SAGA (Spt-Ada-Gcn5 acetyltransferase) complex, which is composed of 19 subunits tra1, spt7, taf5, ngg1/ada3, sgf73, spt20, spt8, taf12, taf6, hfi1/ada1, ubp8, gcn5, ada2, spt3, sgf29, taf10, taf9, sgf11 and sus1. The SAGA complex is composed of 4 modules, namely the HAT (histone acetyltransferase) module (gcn5, ada2, ngg1/ada3 and sgf29), the DUB (deubiquitinating) module (ubp8, sgf11, sgf73 and sus1), the core or TAF (TBP-associated factor) module (taf5, taf6, taf9, taf10 and taf12), and the Tra1 or SPT (Suppressor of Ty) module (tra1, hfi1/ada1, spt3, spt7, spt8 and spt20). The Tra1/SPT module binds activators, the core module recruits TBP (TATA-binding protein), the HAT module contains the histone H3 acetyltransferase gcn5, and the DUB module comprises the histone H2B deubiquitinase ubp8. Interacts with gcn5, taf5 and taf73. Component of the 1.2 MDa TFIID complex, which is composed of TATA-binding protein (TBP) and the 14 TBP-associated factors (TAFs). It comprises 1 copy of each taf1, taf2, taf3, taf7, taf8, taf11, taf13, 2 copies of each taf4, taf5, taf6, taf9, taf10, taf12, and 3 copies of taf14. In TFIID, taf6 heterodimerizes with taf9, forming ultimately an octamer consisting of a taf6-taf9 heterotetramer core flanked by taf4-taf12 dimers on either side, similar to the histone H2A-H2B-H3-H4 octamer.

Its subcellular location is the nucleus. Functionally, functions as a component of both the DNA-binding general transcription initiation factor complex TFIID and the transcription coactivator SAGA complex. Binding of TFIID to a promoter (with or without TATA element) is the initial step in pre-initiation complex (PIC) formation. TFIID plays a key role in the regulation of gene expression by RNA polymerase II through different activities such as transcription activator interaction, core promoter recognition and selectivity, TFIIA and TFIIB interaction, chromatin modification (histone acetylation by TAF1), facilitation of DNA opening and initiation of transcription. SAGA acts as a general cofactor required for essentially all RNA polymerase II transcription. At the promoters, SAGA is required for transcription pre-initiation complex (PIC) recruitment. It influences RNA polymerase II transcriptional activity through different activities such as TBP interaction (via core/TAF module) and promoter selectivity, interaction with transcription activators (via Tra1/SPT module), and chromatin modification through histone acetylation (via HAT module) and deubiquitination (via DUB module). SAGA preferentially acetylates histones H3 (to form H3K9ac, H3K14ac, H3K18ac and H3K23ac) and H2B and deubiquitinates histone H2B. SAGA interacts with DNA via upstream activating sequences (UASs). The protein is SAGA complex/transcription factor TFIID complex subunit Taf6 of Schizosaccharomyces pombe (strain 972 / ATCC 24843) (Fission yeast).